Here is a 291-residue protein sequence, read N- to C-terminus: N-acetylmannosamine kinase (291 aa).

ATP contacts are provided by residues 5–12 and 132–139; these read AIDIGGTK and GVGGGVVS. 4 residues coordinate Zn(2+): His156, Cys166, Cys168, and Cys173.

The protein belongs to the ROK (NagC/XylR) family. NanK subfamily. Homodimer.

It carries out the reaction an N-acyl-D-mannosamine + ATP = an N-acyl-D-mannosamine 6-phosphate + ADP + H(+). It participates in amino-sugar metabolism; N-acetylneuraminate degradation; D-fructose 6-phosphate from N-acetylneuraminate: step 2/5. Its function is as follows. Catalyzes the phosphorylation of N-acetylmannosamine (ManNAc) to ManNAc-6-P. This Escherichia coli (strain SMS-3-5 / SECEC) protein is N-acetylmannosamine kinase.